The chain runs to 103 residues: Sperm-associated antigen 11A (103 aa).

Residues 1–24 form the signal peptide; it reads MRQRLLPSVTSLLLVALLFPGSSQ. Asparagine 29 is a glycosylation site (N-linked (GlcNAc...) asparagine).

Belongs to the SPAG11 family.

It localises to the secreted. Functionally, has antimicrobial activity against E.coli. Plays a role in the defense response in the male reproductive tract, contributing to sperm maturation, storage and protection. The polypeptide is Sperm-associated antigen 11A (Pan troglodytes (Chimpanzee)).